The chain runs to 629 residues: Long-chain-fatty-acid--AMP ligase FadD32 (629 aa).

ATP-binding positions include 186 to 191, Ser341, Ala345, Asp468, and Arg482; that span reads TSGSTR.

Belongs to the ATP-dependent AMP-binding enzyme family. As to quaternary structure, monomer.

It carries out the reaction a long-chain fatty acid + holo-[ACP] + ATP = a long-chain fatty acyl-[ACP] + AMP + diphosphate. The catalysed reaction is dodecanoate + ATP + H(+) = dodecanoyl-AMP + diphosphate. The enzyme catalyses tetradecanoate + ATP + H(+) = tetradecanoyl-AMP + diphosphate. The protein operates within lipid metabolism; mycolic acid biosynthesis. The acyl-AMP ligase activity is inhibited by the alkylphosphate esters of AMP, adenosine 50-dodecylphosphate (AMPC12) and eicosyl-AMP (AMPC20). Functionally, involved in the biosynthesis of mycolic acids. Catalyzes the activation of long-chain fatty acids as acyl-adenylates (acyl-AMP), which are then transferred to the phosphopantetheine arm of the polyketide synthase Pks13 for further chain extension. Can use dodecanoate (C12) and tetradecanoate (C14). The chain is Long-chain-fatty-acid--AMP ligase FadD32 (fadD32) from Mycobacterium marinum (strain ATCC BAA-535 / M).